The primary structure comprises 190 residues: Elongation factor P-like protein (190 aa).

Belongs to the elongation factor P family.

This Salmonella gallinarum (strain 287/91 / NCTC 13346) protein is Elongation factor P-like protein.